The primary structure comprises 172 residues: Scytalone dehydratase-like protein Arp1 (172 aa).

Tyr49 contributes to the substrate binding site. Catalysis depends on residues His84 and His109. Asn130 contacts substrate.

It belongs to the scytalone dehydratase family. As to quaternary structure, homotrimer. Each subunit contains an active site, located in the central part of the hydrophobic core of the monomer, which functions independently.

Functionally, scytalone dehydratase-like protein; part of the Pks2 gene cluster that mediates the formation of infectious structures (appressoria), enabling these fungi to kill insects faster. The product of the Pks2 gene cluster is different from the one of Pks1 and has still not been identified. The sequence is that of Scytalone dehydratase-like protein Arp1 from Metarhizium guizhouense (strain ARSEF 977).